The primary structure comprises 231 residues: Flagellar L-ring protein (231 aa).

A signal peptide spans 1-18; sequence MNRFICVLALSGSAVLAG. Cys-19 carries N-palmitoyl cysteine lipidation. Cys-19 is lipidated: S-diacylglycerol cysteine.

This sequence belongs to the FlgH family. The basal body constitutes a major portion of the flagellar organelle and consists of four rings (L,P,S, and M) mounted on a central rod.

The protein localises to the cell outer membrane. It is found in the bacterial flagellum basal body. Functionally, assembles around the rod to form the L-ring and probably protects the motor/basal body from shearing forces during rotation. The protein is Flagellar L-ring protein of Pseudomonas fluorescens (strain ATCC BAA-477 / NRRL B-23932 / Pf-5).